The sequence spans 334 residues: Fructose-1,6-bisphosphatase class 1 (334 aa).

Residues Glu-90, Asp-113, Leu-115, and Asp-116 each contribute to the Mg(2+) site. Substrate is bound by residues 116-119 (DGSS), Asn-209, Tyr-242, and Lys-272. A Mg(2+)-binding site is contributed by Glu-278.

The protein belongs to the FBPase class 1 family. As to quaternary structure, homotetramer. It depends on Mg(2+) as a cofactor.

Its subcellular location is the cytoplasm. The enzyme catalyses beta-D-fructose 1,6-bisphosphate + H2O = beta-D-fructose 6-phosphate + phosphate. It participates in carbohydrate biosynthesis; gluconeogenesis. The chain is Fructose-1,6-bisphosphatase class 1 from Actinobacillus pleuropneumoniae serotype 7 (strain AP76).